Here is a 48-residue protein sequence, read N- to C-terminus: MSRRMGGGMPKINLSGAIPNNNTSTPSTPTLRSSVSVSSSNSRGLFLA.

Residues 1–48 are disordered; sequence MSRRMGGGMPKINLSGAIPNNNTSTPSTPTLRSSVSVSSSNSRGLFLA. Positions 20 to 48 are enriched in low complexity; sequence NNNTSTPSTPTLRSSVSVSSSNSRGLFLA.

This is an uncharacterized protein from Dictyostelium discoideum (Social amoeba).